The primary structure comprises 383 residues: Acetylornithine deacetylase (383 aa).

Zn(2+) is bound at residue H80. D82 is a catalytic residue. D112 serves as a coordination point for Zn(2+). E144 is a catalytic residue. The Zn(2+) site is built by E145, E169, and H355.

This sequence belongs to the peptidase M20A family. ArgE subfamily. In terms of assembly, homodimer. Zn(2+) serves as cofactor. Co(2+) is required as a cofactor. The cofactor is glutathione.

It is found in the cytoplasm. It catalyses the reaction N(2)-acetyl-L-ornithine + H2O = L-ornithine + acetate. It functions in the pathway amino-acid biosynthesis; L-arginine biosynthesis; L-ornithine from N(2)-acetyl-L-ornithine (linear): step 1/1. Its function is as follows. Catalyzes the hydrolysis of the amide bond of N(2)-acetylated L-amino acids. Cleaves the acetyl group from N-acetyl-L-ornithine to form L-ornithine, an intermediate in L-arginine biosynthesis pathway, and a branchpoint in the synthesis of polyamines. This chain is Acetylornithine deacetylase, found in Escherichia coli O127:H6 (strain E2348/69 / EPEC).